Reading from the N-terminus, the 301-residue chain is Probable aspartoacylase (301 aa).

His13 and Glu16 together coordinate Zn(2+). Substrate contacts are provided by residues Arg54 and 61–62; that span reads NR. Zn(2+) is bound at residue His105. Residues Glu163 and Tyr273 each contribute to the substrate site.

The protein belongs to the AspA/AstE family. Aspartoacylase subfamily. Requires Zn(2+) as cofactor.

The catalysed reaction is an N-acyl-L-aspartate + H2O = a carboxylate + L-aspartate. The polypeptide is Probable aspartoacylase (Prochlorococcus marinus (strain MIT 9215)).